The sequence spans 38 residues: Histidine decarboxylase small chain (38 aa).

Heterohexamer of 3 large and 3 small chains. It depends on pyruvate as a cofactor.

It carries out the reaction L-histidine + H(+) = histamine + CO2. This Micrococcus sp protein is Histidine decarboxylase small chain.